The sequence spans 359 residues: CMP-N-acetylneuraminate-poly-alpha-2,8-sialyltransferase (359 aa).

At 1–7 the chain is on the cytoplasmic side; that stretch reads MRSIRKR. Residues 8–20 form a helical; Signal-anchor for type II membrane protein membrane-spanning segment; that stretch reads WTICTISLLLIFY. At 21 to 359 the chain is on the lumenal side; that stretch reads KTKEMARTEE…KLTTGKCIKQ (339 aa). 3 N-linked (GlcNAc...) asparagine glycosylation sites follow: Asn50, Asn74, and Asn119. Disulfide bonds link Cys142–Cys292 and Cys156–Cys356. Positions 147 and 170 each coordinate CMP-N-acetyl-beta-neuraminate. N-linked (GlcNAc...) asparagine glycans are attached at residues Asn204 and Asn219. The CMP-N-acetyl-beta-neuraminate site is built by Ser279, Thr280, Gly281, and Trp301. Catalysis depends on His331, which acts as the Proton donor/acceptor.

Belongs to the glycosyltransferase 29 family. Autopolysialylated.

Its subcellular location is the golgi apparatus membrane. The protein resides in the secreted. It catalyses the reaction [N-acetyl-alpha-D-neuraminosyl-(2-&gt;8)](n) + CMP-N-acetyl-beta-neuraminate = [N-acetyl-alpha-D-neuraminosyl-(2-&gt;8)](n+1) + CMP + H(+). Functionally, catalyzes the transfer of a sialic acid from a CMP-linked sialic acid donor onto a terminal alpha-2,3-, alpha-2,6-, or alpha-2,8-linked sialic acid of an N-linked glycan protein acceptor through alpha-2,8-linkages. Therefore, participates in polysialic acid synthesis on various sialylated N-acetyllactosaminyl oligosaccharides, including NCAM1 N-glycans, FETUB N-glycans and AHSG. It is noteworthy that alpha-2,3-linked sialic acid is apparently a better acceptor than alpha-2,6-linked sialic acid. The protein is CMP-N-acetylneuraminate-poly-alpha-2,8-sialyltransferase (ST8SIA4) of Bos taurus (Bovine).